Consider the following 694-residue polypeptide: Acetyl-coenzyme A synthetase (694 aa).

Residues 1–23 are disordered; it reads MSDKRPRSPCSNNNDELNDSSVL. Positions 9–23 are enriched in polar residues; the sequence is PCSNNNDELNDSSVL. CoA is bound by residues 229 to 232 and Thr347; that span reads RGKK. ATP contacts are provided by residues 423–425, 447–452, Asp536, and Arg551; these read GEP and DTYWQT. Ser559 provides a ligand contact to CoA. An ATP-binding site is contributed by Arg562. Arg628 is a CoA binding site.

The protein belongs to the ATP-dependent AMP-binding enzyme family.

It carries out the reaction acetate + ATP + CoA = acetyl-CoA + AMP + diphosphate. The polypeptide is Acetyl-coenzyme A synthetase (ACS) (Cryptosporidium parvum).